Here is a 465-residue protein sequence, read N- to C-terminus: Cysteine--tRNA ligase (465 aa).

A Zn(2+)-binding site is contributed by Cys-27. The 'HIGH' region motif lies at 29–39 (PTTYNYIHIGN). Zn(2+) contacts are provided by Cys-207, His-232, and Glu-236. Positions 264–268 (KMSKS) match the 'KMSKS' region motif. ATP is bound at residue Lys-267.

The protein belongs to the class-I aminoacyl-tRNA synthetase family. In terms of assembly, monomer. Requires Zn(2+) as cofactor.

It is found in the cytoplasm. The enzyme catalyses tRNA(Cys) + L-cysteine + ATP = L-cysteinyl-tRNA(Cys) + AMP + diphosphate. The polypeptide is Cysteine--tRNA ligase (Carboxydothermus hydrogenoformans (strain ATCC BAA-161 / DSM 6008 / Z-2901)).